We begin with the raw amino-acid sequence, 27 residues long: Zinc metalloproteinase multactivase catalytic subunit (27 aa).

The region spanning 12–27 (FIELVIIVDHSXXTYK) is the Peptidase M12B domain. Glu14 is a binding site for Ca(2+).

The protein belongs to the venom metalloproteinase (M12B) family. P-III subfamily. P-IIId sub-subfamily. In terms of assembly, heterodimer of a metalloproteinase subunit and a regulatory subunit comprising two homologous disulfide-linked lectins (AC P81798). Zn(2+) is required as a cofactor. Expressed by the venom gland.

Its subcellular location is the secreted. Functionally, this carinactivase-like calcium-dependent prothrombin (F2) activator activates prothrombin via recognition of the calcium ion bound conformation of its gamma-carboxyglutamic acid (GLA) domain, and the subsequent conversion of prothrombin to active thrombin is catalyzed by the catalytic subunit. The protein is Zinc metalloproteinase multactivase catalytic subunit of Echis multisquamatus (Central Asian sand viper).